The primary structure comprises 320 residues: Malate dehydrogenase (320 aa).

NAD(+)-binding positions include 10–15 (GSGMIG) and D34. Substrate is bound by residues R83 and R89. Residues N96 and 119-121 (ITN) contribute to the NAD(+) site. 2 residues coordinate substrate: N121 and R152. Catalysis depends on H176, which acts as the Proton acceptor.

Belongs to the LDH/MDH superfamily. MDH type 3 family.

The enzyme catalyses (S)-malate + NAD(+) = oxaloacetate + NADH + H(+). In terms of biological role, catalyzes the reversible oxidation of malate to oxaloacetate. This Bartonella tribocorum (strain CIP 105476 / IBS 506) protein is Malate dehydrogenase.